A 310-amino-acid polypeptide reads, in one-letter code: tRNA-dihydrouridine(16) synthase (310 aa).

Residues 7 to 9 and Gln68 contribute to the FMN site; that span reads PMQ. Catalysis depends on Cys98, which acts as the Proton donor. Residues Lys139, 200 to 202, and 224 to 225 each bind FMN; these read NGE and GR.

The protein belongs to the Dus family. DusC subfamily. The cofactor is FMN.

The enzyme catalyses 5,6-dihydrouridine(16) in tRNA + NADP(+) = uridine(16) in tRNA + NADPH + H(+). The catalysed reaction is 5,6-dihydrouridine(16) in tRNA + NAD(+) = uridine(16) in tRNA + NADH + H(+). Functionally, catalyzes the synthesis of 5,6-dihydrouridine (D), a modified base found in the D-loop of most tRNAs, via the reduction of the C5-C6 double bond in target uridines. Specifically modifies U16 in tRNAs. The protein is tRNA-dihydrouridine(16) synthase of Haemophilus influenzae (strain ATCC 51907 / DSM 11121 / KW20 / Rd).